The chain runs to 61 residues: Putative MSV199 domain-containing protein 200R (61 aa).

The polypeptide is Putative MSV199 domain-containing protein 200R (Invertebrate iridescent virus 6 (IIV-6)).